The primary structure comprises 347 residues: Probable dual-specificity RNA methyltransferase RlmN (347 aa).

Glu-94 functions as the Proton acceptor in the catalytic mechanism. Residues 100–319 (YPSRTIACIS…LDTLVKNGID (220 aa)) enclose the Radical SAM core domain. Cys-107 and Cys-334 form a disulfide bridge. [4Fe-4S] cluster-binding residues include Cys-114, Cys-118, and Cys-121. S-adenosyl-L-methionine is bound by residues 161–162 (GE), Ser-193, 216–218 (SLH), and Asn-292. Cys-334 acts as the S-methylcysteine intermediate in catalysis.

The protein belongs to the radical SAM superfamily. RlmN family. [4Fe-4S] cluster is required as a cofactor.

It localises to the cytoplasm. The enzyme catalyses adenosine(2503) in 23S rRNA + 2 reduced [2Fe-2S]-[ferredoxin] + 2 S-adenosyl-L-methionine = 2-methyladenosine(2503) in 23S rRNA + 5'-deoxyadenosine + L-methionine + 2 oxidized [2Fe-2S]-[ferredoxin] + S-adenosyl-L-homocysteine. It catalyses the reaction adenosine(37) in tRNA + 2 reduced [2Fe-2S]-[ferredoxin] + 2 S-adenosyl-L-methionine = 2-methyladenosine(37) in tRNA + 5'-deoxyadenosine + L-methionine + 2 oxidized [2Fe-2S]-[ferredoxin] + S-adenosyl-L-homocysteine. Specifically methylates position 2 of adenine 2503 in 23S rRNA and position 2 of adenine 37 in tRNAs. This Petrotoga mobilis (strain DSM 10674 / SJ95) protein is Probable dual-specificity RNA methyltransferase RlmN.